The primary structure comprises 407 residues: Methylthioribose kinase (407 aa).

ATP contacts are provided by residues asparagine 40, lysine 57, and 111–113; that span reads EDL. Aspartate 229 contacts substrate. 246–248 contributes to the ATP binding site; the sequence is DAE. Arginine 344 serves as a coordination point for substrate.

This sequence belongs to the methylthioribose kinase family. In terms of assembly, homodimer.

The enzyme catalyses 5-(methylsulfanyl)-D-ribose + ATP = 5-(methylsulfanyl)-alpha-D-ribose 1-phosphate + ADP + H(+). The protein operates within amino-acid biosynthesis; L-methionine biosynthesis via salvage pathway; S-methyl-5-thio-alpha-D-ribose 1-phosphate from S-methyl-5'-thioadenosine (hydrolase route): step 2/2. Functionally, catalyzes the phosphorylation of methylthioribose into methylthioribose-1-phosphate. This chain is Methylthioribose kinase, found in Yersinia pseudotuberculosis serotype O:1b (strain IP 31758).